Consider the following 252-residue polypeptide: Oil body-associated protein 2A (252 aa).

A disordered region spans residues 1-31 (MASSDGKPLPTPASVGGGGGSSTAPPGQPTT). Low complexity predominate over residues 22–31 (STAPPGQPTT).

The protein belongs to the OBAP family.

This chain is Oil body-associated protein 2A, found in Zea mays (Maize).